Reading from the N-terminus, the 425-residue chain is uncharacterized protein (425 aa).

The CHY-type zinc-finger motif lies at 135 to 202; it reads KEQEILGCSH…AAQYCKYCKN (68 aa). Zn(2+) contacts are provided by cysteine 142, histidine 144, cysteine 153, cysteine 156, cysteine 162, cysteine 165, histidine 166, histidine 172, cysteine 184, cysteine 187, cysteine 197, cysteine 200, cysteine 209, cysteine 212, histidine 225, cysteine 226, cysteine 229, cysteine 232, histidine 244, cysteine 245, cysteine 248, cysteine 251, histidine 260, and cysteine 262. A CTCHY-type zinc finger spans residues 204–270; sequence MGRYYCNKCK…RCIERSTDCN (67 aa). The RING-type; atypical zinc-finger motif lies at 271–313; that stretch reads CPICGEYMFNSRERVIFLSCSHPLHQRCHEEYIRTNYRCPTCY.

This is an uncharacterized protein from Schizosaccharomyces pombe (strain 972 / ATCC 24843) (Fission yeast).